The following is a 154-amino-acid chain: Peptide methionine sulfoxide reductase MsrB (154 aa).

The region spanning 28-150 (DQQWREQLSE…NSVSLIFNKI (123 aa)) is the MsrB domain. Residues cysteine 67, cysteine 70, cysteine 116, and cysteine 119 each contribute to the Zn(2+) site. Residue cysteine 139 is the Nucleophile of the active site.

It belongs to the MsrB Met sulfoxide reductase family. The cofactor is Zn(2+).

The enzyme catalyses L-methionyl-[protein] + [thioredoxin]-disulfide + H2O = L-methionyl-(R)-S-oxide-[protein] + [thioredoxin]-dithiol. The sequence is that of Peptide methionine sulfoxide reductase MsrB from Vibrio vulnificus (strain YJ016).